Here is a 431-residue protein sequence, read N- to C-terminus: Adenylosuccinate synthetase (431 aa).

GTP is bound by residues 13-19 and 41-43; these read GDEGKGK and GHT. Catalysis depends on D14, which acts as the Proton acceptor. Residues D14 and G41 each coordinate Mg(2+). Residues 14–17, 39–42, T130, R144, Q225, T240, and R304 each bind IMP; these read DEGK and NAGH. H42 (proton donor) is an active-site residue. 300-306 contacts substrate; it reads ATTGRKR. GTP-binding positions include R306, 332–334, and 415–417; these read KLD and STG.

The protein belongs to the adenylosuccinate synthetase family. In terms of assembly, homodimer. It depends on Mg(2+) as a cofactor.

It is found in the cytoplasm. It catalyses the reaction IMP + L-aspartate + GTP = N(6)-(1,2-dicarboxyethyl)-AMP + GDP + phosphate + 2 H(+). It functions in the pathway purine metabolism; AMP biosynthesis via de novo pathway; AMP from IMP: step 1/2. Functionally, plays an important role in the de novo pathway of purine nucleotide biosynthesis. Catalyzes the first committed step in the biosynthesis of AMP from IMP. The chain is Adenylosuccinate synthetase from Shewanella woodyi (strain ATCC 51908 / MS32).